The sequence spans 1940 residues: Myosin-3 (1940 aa).

The Myosin N-terminal SH3-like domain maps to 33-82 (DAKTYCFVVDSKEEYAKGKIKSSQDGKVTVETEDNRTLVVKPEDVYAMNP). The 694-residue stretch at 86–779 (DKIEDMAMLT…LLGTLEEMRD (694 aa)) folds into the Myosin motor domain. Residue Lys-130 is modified to N6,N6,N6-trimethyllysine. Residue 179 to 186 (GESGAGKT) coordinates ATP. Actin-binding regions lie at residues 656–678 (LNKLMSNLRTTHPHFVRCIIPNE) and 758–772 (KFGHTKVFFKAGLLG). Positions 782-811 (LAKLITRTQAVCRGFLMRVEFQKMMQRRES) constitute an IQ domain. Positions 840–1933 (LLKSAETEKE…KTRDFTSSRM (1094 aa)) form a coiled coil. The disordered stretch occupies residues 1260-1289 (ARGKNEETQRSLSELTTQKSRLQTEAGELS). Over residues 1269–1282 (RSLSELTTQKSRLQ) the composition is skewed to polar residues.

The protein belongs to the TRAFAC class myosin-kinesin ATPase superfamily. Myosin family. As to quaternary structure, muscle myosin is a hexameric protein that consists of 2 heavy chain subunits (MHC), 2 alkali light chain subunits (MLC) and 2 regulatory light chain subunits (MLC-2).

Its subcellular location is the cytoplasm. It localises to the myofibril. Muscle contraction. The sequence is that of Myosin-3 (Myh3) from Rattus norvegicus (Rat).